Reading from the N-terminus, the 405-residue chain is uncharacterized protein (405 aa).

This sequence belongs to the UDP-glycosyltransferase family.

This is an uncharacterized protein from Bacillus subtilis (strain 168).